Reading from the N-terminus, the 224-residue chain is Retinoschisin (224 aa).

Positions 1-23 (MPHKIEGFFLLLLFGYEATLGLS) are cleaved as a signal peptide. Positions 63 to 219 (CPYHKPLGFE…IAIRMELLEC (157 aa)) constitute an F5/8 type C domain. 2 disulfide bridges follow: Cys63/Cys219 and Cys110/Cys142.

In terms of assembly, homooctamer of 4 homodimers; disulfide-linked. The homooctamer has a flat, cogwheel structure with a diameter of about 14 nm. Two stacked octamers can assemble to form a hexadecamer. Detected in the eye cup. Detected in retina, in the inner segment of the photoreceptors, the inner nuclear layer, the inner plexiform layer and the ganglion cell layer (at protein level). Restricted to the retina. At the mRNA level, detected only within the photoreceptor cell layer, most prominently within the inner segments of the photoreceptors. Undetectable in the inner plexiform layers and the inner nuclear layer.

Its subcellular location is the secreted. The protein localises to the cell membrane. Its function is as follows. Binds negatively charged membrane lipids, such as phosphatidylserine and phosphoinositides. May play a role in cell-cell adhesion processes in the retina, via homomeric interaction between octamers present on the surface of two neighboring cells. Required for normal structure and function of the retina. In Mus musculus (Mouse), this protein is Retinoschisin (Rs1).